Reading from the N-terminus, the 116-residue chain is Ribosome-binding factor A (116 aa).

Belongs to the RbfA family. Monomer. Binds 30S ribosomal subunits, but not 50S ribosomal subunits or 70S ribosomes.

The protein resides in the cytoplasm. Functionally, one of several proteins that assist in the late maturation steps of the functional core of the 30S ribosomal subunit. Associates with free 30S ribosomal subunits (but not with 30S subunits that are part of 70S ribosomes or polysomes). Required for efficient processing of 16S rRNA. May interact with the 5'-terminal helix region of 16S rRNA. This is Ribosome-binding factor A from Streptococcus sanguinis (strain SK36).